The following is a 660-amino-acid chain: Replication restart protein PriA (660 aa).

The Helicase ATP-binding domain maps to 145-313 (IIGSEKTNVF…KNNQIKKIIM (169 aa)). 158 to 165 (GIPGSGKT) serves as a coordination point for ATP. The short motif at 256–259 (DEEH) is the DEAH box element. Positions 370, 373, 379, 382, 397, 400, 410, and 413 each coordinate Zn(2+). The Helicase C-terminal domain occupies 405–557 (KTASHCPQCE…QFYEEELDIR (153 aa)).

Belongs to the helicase family. PriA subfamily. In terms of assembly, component of the replication restart primosome. Requires Zn(2+) as cofactor.

The enzyme catalyses Couples ATP hydrolysis with the unwinding of duplex DNA by translocating in the 3'-5' direction.. It carries out the reaction ATP + H2O = ADP + phosphate + H(+). Its function is as follows. Initiates the restart of stalled replication forks, which reloads the replicative helicase on sites other than the origin of replication. Recognizes and binds to abandoned replication forks and remodels them to uncover a helicase loading site. Promotes assembly of the primosome at these replication forks. The sequence is that of Replication restart protein PriA from Borreliella burgdorferi (strain ATCC 35210 / DSM 4680 / CIP 102532 / B31) (Borrelia burgdorferi).